The primary structure comprises 346 residues: Sensor protein kinase GraS (346 aa).

The next 2 helical transmembrane spans lie at 18-38 and 43-63; these read IFWI…DYDF and LFYI…LTFF. A Histidine kinase domain is found at 126 to 332; sequence EFVHDIKTPV…TVKLIFPLQN (207 aa).

As to quaternary structure, interacts with GraX.

The protein resides in the cell membrane. The enzyme catalyses ATP + protein L-histidine = ADP + protein N-phospho-L-histidine.. Its function is as follows. Member of the two-component regulatory system GraR/GraS involved in resistance against cationic antimicrobial peptides (CAMPs). Functions as a sensor protein kinase which phosphorylates GraR through the auxiliary protein GraX. In turn, GraR up-regulates many genes such as adhesins, exoproteins, transporters, toxins, and proteins involved in cell wall synthesis. Down-regulates the expression of many genes involved in RNA and amino acid synthesis or glycolysis. The sequence is that of Sensor protein kinase GraS (graS) from Staphylococcus aureus (strain MRSA252).